We begin with the raw amino-acid sequence, 330 residues long: Ketol-acid reductoisomerase (NADP(+)) (330 aa).

Residues 1-182 enclose the KARI N-terminal Rossmann domain; sequence MAVVYYDQDA…GATRAGVIET (182 aa). Residues 25 to 28, Arg-48, Ser-51, Ser-53, and 83 to 86 contribute to the NADP(+) site; these read YGSQ and DETQ. The active site involves His-108. Gly-134 provides a ligand contact to NADP(+). Positions 183–328 constitute a KARI C-terminal knotted domain; that stretch reads TFKEETETDL…DQLREMMSWL (146 aa). Asp-191, Glu-195, Glu-227, and Glu-231 together coordinate Mg(2+). Residue Ser-252 participates in substrate binding.

This sequence belongs to the ketol-acid reductoisomerase family. Mg(2+) serves as cofactor.

It carries out the reaction (2R)-2,3-dihydroxy-3-methylbutanoate + NADP(+) = (2S)-2-acetolactate + NADPH + H(+). It catalyses the reaction (2R,3R)-2,3-dihydroxy-3-methylpentanoate + NADP(+) = (S)-2-ethyl-2-hydroxy-3-oxobutanoate + NADPH + H(+). Its pathway is amino-acid biosynthesis; L-isoleucine biosynthesis; L-isoleucine from 2-oxobutanoate: step 2/4. The protein operates within amino-acid biosynthesis; L-valine biosynthesis; L-valine from pyruvate: step 2/4. Involved in the biosynthesis of branched-chain amino acids (BCAA). Catalyzes an alkyl-migration followed by a ketol-acid reduction of (S)-2-acetolactate (S2AL) to yield (R)-2,3-dihydroxy-isovalerate. In the isomerase reaction, S2AL is rearranged via a Mg-dependent methyl migration to produce 3-hydroxy-3-methyl-2-ketobutyrate (HMKB). In the reductase reaction, this 2-ketoacid undergoes a metal-dependent reduction by NADPH to yield (R)-2,3-dihydroxy-isovalerate. The chain is Ketol-acid reductoisomerase (NADP(+)) from Moorella thermoacetica (strain ATCC 39073 / JCM 9320).